A 290-amino-acid polypeptide reads, in one-letter code: MSVYYGSIEAGGTKFVLAIADEHFNIIKKFKFATTTPQETISKTIKYFKENRVSAIGLGSFGPIDLNLSSKTYGYITSTPKVGWKNINLVGQLKEALDIPIYFTTDVNASAYGEMKNTGIKNLVYLTIGTGIGGGAIQNGYFIGGIGHSEMGHQRINRHRDVLTFEGICPFHGDCLEGVAAGPSLEARTGILGEKISSDDPIWDILSYYIAQAAINATLTLAPECIILGGGVMEKPNMISLIQKQFISMLNNYIDLPCSVEKYIRLPTVKENGSATLGNFYLAYSLFTKE.

Thr-130 serves as a coordination point for ATP. The Zn(2+) site is built by His-153, Cys-169, His-172, and Cys-175. Residues Pro-183 and 231–235 (GVMEK) contribute to the ATP site.

Belongs to the ROK (NagC/XylR) family. Homodimer. It depends on Mg(2+) as a cofactor.

It catalyses the reaction D-fructose + ATP = D-fructose 6-phosphate + ADP + H(+). With respect to regulation, inactivated by EDTA. Inhibition by zinc ions (Potential). This Lactococcus lactis subsp. cremoris (Streptococcus cremoris) protein is Fructokinase (scrK).